The primary structure comprises 1138 residues: Phosphatidylserine decarboxylase proenzyme 2 (1138 aa).

The 122-residue stretch at 1-122 (MRIIKGRKRG…SNSGLSSHSH (122 aa)) folds into the C2 1 domain. 3 disordered regions span residues 90–166 (TGAP…PGST), 269–305 (MRSSSSLPPPLEDMLSNSSAVSGNEIRREKPYSDTDL), and 413–448 (AVSENDITSVDDEESENQQESDEEFDIYNEDEREDS). Low complexity predominate over residues 98–121 (SRPRTTTANTSSSTLSNSGLSSHS). Polar residues predominate over residues 125–135 (RNLNVTSKGNQ). The span at 136–166 (TSTSINSVSSSATPAPSHSSSSLSTTGPGST) shows a compositional bias: low complexity. Residues 293–305 (EIRREKPYSDTDL) show a composition bias toward basic and acidic residues. A compositionally biased stretch (acidic residues) spans 421-448 (SVDDEESENQQESDEEFDIYNEDEREDS). In terms of domain architecture, C2 2 spans 478–600 (RRAKSNFFIS…QQQQHENEWI (123 aa)). Residues Asp-571, Ser-574, and Asp-577 each contribute to the Ca(2+) site. Residues Asp-899, His-956, and Ser-1043 each act as charge relay system; for autoendoproteolytic cleavage activity in the active site. Catalysis depends on Ser-1043, which acts as the Schiff-base intermediate with substrate; via pyruvic acid; for decarboxylase activity. Ser-1043 carries the post-translational modification Pyruvic acid (Ser); by autocatalysis.

Belongs to the phosphatidylserine decarboxylase family. PSD-B subfamily. Eukaryotic type II sub-subfamily. Heterodimer of a large membrane-associated beta subunit and a small pyruvoyl-containing alpha subunit. Interacts with pstB2/PDR17. This interaction may be a means to structurally tether the donor membrane (ER) harboring PstB2/PDR17 to acceptor membranes (Golgi/endosomes) harboring PSD2 during PtdSer transport to the site of PtdEtn synthesis. It depends on pyruvate as a cofactor. Requires Ca(2+) as cofactor. In terms of processing, is synthesized initially as an inactive proenzyme. Formation of the active enzyme involves a self-maturation process in which the active site pyruvoyl group is generated from an internal serine residue via an autocatalytic post-translational modification. Two non-identical subunits are generated from the proenzyme in this reaction, and the pyruvate is formed at the N-terminus of the alpha chain, which is derived from the carboxyl end of the proenzyme. The autoendoproteolytic cleavage occurs by a canonical serine protease mechanism, in which the side chain hydroxyl group of the serine supplies its oxygen atom to form the C-terminus of the beta chain, while the remainder of the serine residue undergoes an oxidative deamination to produce ammonia and the pyruvoyl prosthetic group on the alpha chain. During this reaction, the Ser that is part of the protease active site of the proenzyme becomes the pyruvoyl prosthetic group, which constitutes an essential element of the active site of the mature decarboxylase.

Its subcellular location is the golgi apparatus membrane. The protein localises to the endosome membrane. It catalyses the reaction a 1,2-diacyl-sn-glycero-3-phospho-L-serine + H(+) = a 1,2-diacyl-sn-glycero-3-phosphoethanolamine + CO2. The protein operates within phospholipid metabolism; phosphatidylethanolamine biosynthesis; phosphatidylethanolamine from CDP-diacylglycerol: step 2/2. Its function is as follows. Catalyzes the formation of phosphatidylethanolamine (PtdEtn) from phosphatidylserine (PtdSer). Plays a central role in phospholipid metabolism and in the interorganelle trafficking of phosphatidylserine. Phosphatidylethanolamine produced by PSD2 is insufficient to completely provide the PtdEtn pool required by mitochondria under respiratory conditions. PSD2 is also involved in the PtdSer transport step to the site of PtdEtn synthesis on the Golgi/endosome membranes. Required for normal heavy metal resistance. In Saccharomyces cerevisiae (strain ATCC 204508 / S288c) (Baker's yeast), this protein is Phosphatidylserine decarboxylase proenzyme 2.